A 607-amino-acid polypeptide reads, in one-letter code: Condensin-2 complex subunit H2 (607 aa).

T19 carries the post-translational modification Phosphothreonine. Phosphoserine occurs at positions 95, 231, 235, and 252. Disordered stretches follow at residues 211 to 312 (YPMS…WQSL) and 325 to 347 (KGKPYSVPPGVEEAPGQKRKRKG). The segment covering 254–263 (GEEDAEDGAE) has biased composition (acidic residues). At S494 the chain carries Phosphoserine.

The protein belongs to the CND2 H2 (condensin-2 subunit 2) family. As to quaternary structure, component of the condensin-2 complex, which contains the SMC2 and SMC4 heterodimer, and three non SMC subunits, NCAPG2, NCAPH2 and NCAPD3 that probably regulate the complex.

It localises to the nucleus. Its function is as follows. Regulatory subunit of the condensin-2 complex, a complex that seems to provide chromosomes with an additional level of organization and rigidity and in establishing mitotic chromosome architecture. May promote the resolution of double-strand DNA catenanes (intertwines) between sister chromatids. Condensin-mediated compaction likely increases tension in catenated sister chromatids, providing directionality for type II topoisomerase-mediated strand exchanges toward chromatid decatenation. Required for decatenation of chromatin bridges at anaphase. Early in neurogenesis, may play an essential role to ensure accurate mitotic chromosome condensation in neuron stem cells, ultimately affecting neuron pool and cortex size. Seems to have lineage-specific role in T-cell development. This is Condensin-2 complex subunit H2 from Mus musculus (Mouse).